The sequence spans 274 residues: Centromere protein K (274 aa).

Positions 1 to 21 are disordered; sequence MSGYQHELPPNISKTSPAPEE. Residues 96–159 are a coiled coil; the sequence is KEELEKIAQE…NQLTAFSEKR (64 aa).

The protein belongs to the CENP-K/MCM22 family.

The protein localises to the nucleus. Its subcellular location is the chromosome. The protein resides in the centromere. It is found in the kinetochore. Functionally, probable component of a centromeric complex involved in assembly of kinetochore proteins, mitotic progression and chromosome segregation. The protein is Centromere protein K (cenpk) of Xenopus laevis (African clawed frog).